The chain runs to 268 residues: Shikimate dehydrogenase (NADP(+)) (268 aa).

Residues Ser13–Ser15 and Thr60 each bind shikimate. Lys64 functions as the Proton acceptor in the catalytic mechanism. NADP(+) is bound at residue Glu76. Residues Asn85 and Asp100 each contribute to the shikimate site. Residues Gly124–Ala128, Asn148–Arg153, and Ile209 each bind NADP(+). Position 211 (Tyr211) interacts with shikimate. Gly232 contributes to the NADP(+) binding site.

It belongs to the shikimate dehydrogenase family. As to quaternary structure, homodimer.

The catalysed reaction is shikimate + NADP(+) = 3-dehydroshikimate + NADPH + H(+). Its pathway is metabolic intermediate biosynthesis; chorismate biosynthesis; chorismate from D-erythrose 4-phosphate and phosphoenolpyruvate: step 4/7. Its function is as follows. Involved in the biosynthesis of the chorismate, which leads to the biosynthesis of aromatic amino acids. Catalyzes the reversible NADPH linked reduction of 3-dehydroshikimate (DHSA) to yield shikimate (SA). The sequence is that of Shikimate dehydrogenase (NADP(+)) from Staphylococcus aureus (strain MSSA476).